Consider the following 63-residue polypeptide: Large ribosomal subunit protein bL35 (63 aa).

It belongs to the bacterial ribosomal protein bL35 family.

The sequence is that of Large ribosomal subunit protein bL35 from Thermobifida fusca (strain YX).